The following is a 144-amino-acid chain: MRFPSIFTAVLFAASSALAAPVNTTTEDETAQIPAEAVIGYLDLEGDFDVAVLPFSNSTNNGLLFINTTIASIAAKEEGVSLDKREAEAWHWLQLKPGQPMYKREADAEAWHWLQLKPGQPMYKREADAEAWHWLQLKPGQPMY.

The segment at residues 1-19 (MRFPSIFTAVLFAASSALA) is a signal peptide (or 20).

In terms of biological role, the active factor is excreted into the culture medium by haploid cells of the alpha mating type and acts on cells of the opposite mating type (type A). It mediates the conjugation process between the two types by inhibiting the initiation of DNA synthesis in type a cells and synchronizing them with type alpha. This Saccharomyces uvarum (Yeast) protein is Mating factor alpha.